A 152-amino-acid chain; its full sequence is Large ribosomal subunit protein uL13 (152 aa).

This sequence belongs to the universal ribosomal protein uL13 family. As to quaternary structure, part of the 50S ribosomal subunit.

This protein is one of the early assembly proteins of the 50S ribosomal subunit, although it is not seen to bind rRNA by itself. It is important during the early stages of 50S assembly. This chain is Large ribosomal subunit protein uL13, found in Wolbachia pipientis wMel.